A 188-amino-acid chain; its full sequence is Heterodisulfide reductase subunit C-like protein (188 aa).

4Fe-4S ferredoxin-type domains lie at 34–64 (KELG…FEWY) and 78–109 (DELL…FEVM). Positions 44, 47, 50, 54, 89, 92, 95, and 99 each coordinate [4Fe-4S] cluster.

This sequence belongs to the HdrC family. In terms of assembly, the heterodisulfide reductase is composed of three subunits; HdlA, HdlB and HdlC. It forms a complex with the F420-non-reducing hydrogenase (Mvh), which provides the reducing equivalents to the heterodisulfide reductase.

The protein localises to the cytoplasm. Has oxidoreductase activity. The Hdl and Mvh subunits may together mediate electron transfer from hydrogen to an unidentified electron acceptor on the cytoplasmic side of the membrane. This is Heterodisulfide reductase subunit C-like protein (hdlC) from Archaeoglobus profundus (strain DSM 5631 / JCM 9629 / NBRC 100127 / Av18).